The sequence spans 515 residues: 1-pyrroline-5-carboxylate dehydrogenase (515 aa).

Residues Glu-286 and Cys-320 contribute to the active site.

The protein belongs to the aldehyde dehydrogenase family. RocA subfamily.

The enzyme catalyses L-glutamate 5-semialdehyde + NAD(+) + H2O = L-glutamate + NADH + 2 H(+). The protein operates within amino-acid degradation; L-proline degradation into L-glutamate; L-glutamate from L-proline: step 2/2. The chain is 1-pyrroline-5-carboxylate dehydrogenase from Oceanobacillus iheyensis (strain DSM 14371 / CIP 107618 / JCM 11309 / KCTC 3954 / HTE831).